The sequence spans 178 residues: Large ribosomal subunit protein uL6 (178 aa).

This sequence belongs to the universal ribosomal protein uL6 family. In terms of assembly, part of the 50S ribosomal subunit.

Its function is as follows. This protein binds to the 23S rRNA, and is important in its secondary structure. It is located near the subunit interface in the base of the L7/L12 stalk, and near the tRNA binding site of the peptidyltransferase center. The protein is Large ribosomal subunit protein uL6 of Arthrobacter sp. (strain FB24).